The chain runs to 138 residues: DNA-directed RNA polymerase subunit omega (138 aa).

It belongs to the RNA polymerase subunit omega family. In terms of assembly, the RNAP catalytic core consists of 2 alpha, 1 beta, 1 beta' and 1 omega subunit. When a sigma factor is associated with the core the holoenzyme is formed, which can initiate transcription.

It catalyses the reaction RNA(n) + a ribonucleoside 5'-triphosphate = RNA(n+1) + diphosphate. In terms of biological role, promotes RNA polymerase assembly. Latches the N- and C-terminal regions of the beta' subunit thereby facilitating its interaction with the beta and alpha subunits. This is DNA-directed RNA polymerase subunit omega from Thermodesulfovibrio yellowstonii (strain ATCC 51303 / DSM 11347 / YP87).